A 362-amino-acid chain; its full sequence is Cyclic di-GMP phosphodiesterase PdeL (362 aa).

The HTH luxR-type domain maps to 18 to 83 (HLSLPGSVSE…TFWRDIFFQY (66 aa)). The segment at residues 42–61 (VTEISQYRNRSAKTISHQKK) is a DNA-binding region (H-T-H motif). The region spanning 106 to 360 (HIVTPEAISL…KFISEWVMKA (255 aa)) is the EAL domain. Gln-127 contributes to the substrate binding site. Residue Glu-141 participates in Mg(2+) binding. Residues 144–145 (VR) and Asn-200 each bind substrate. Mg(2+) is bound by residues Asn-200, Glu-232, and Asp-262. Residues Asp-262, Lys-286, 319–322 (EGVE), and Tyr-341 contribute to the substrate site.

As to quaternary structure, is in a fast thermodynamic monomer-homodimer equilibrium. Dimerization is required for PDE activity. Dimerization affinity is increased about 100-fold upon substrate binding. The cofactor is Mg(2+). Mn(2+) is required as a cofactor.

The catalysed reaction is 3',3'-c-di-GMP + H2O = 5'-phosphoguanylyl(3'-&gt;5')guanosine + H(+). Its activity is regulated as follows. Strongly inhibited by Ca(2+). Functionally, acts both as an enzyme and as a c-di-GMP sensor to couple transcriptional activity to the c-di-GMP status of the cell. Phosphodiesterase (PDE) that catalyzes the hydrolysis of cyclic-di-GMP (c-di-GMP) to 5'-pGpG. Also acts as a transcription factor to control its own expression. This is Cyclic di-GMP phosphodiesterase PdeL from Escherichia coli (strain K12).